A 35-amino-acid polypeptide reads, in one-letter code: Peptide Hact-3 (35 aa).

Expressed in tentacles.

It is found in the nematocyst. It localises to the secreted. Functionally, peptide with unknown function. Does not exhibit antimicrobial activity against Escherichia coli and Staphylococcus aureus. The sequence is that of Peptide Hact-3 from Heliofungia actiniformis (Mushroom coral).